The sequence spans 136 residues: MGIYQWRDKKKPSGGKRRYYYKVKRKYAAGRPPTYTTLSAAEEEERKPVRARGGSYKIKAKKVAFAVVSNPKTGEARKARILRIVETPAHREYARRGIIVKGAVIDTTLGRAVVTSRPGQEGVVNAVLLEEQGQKQ.

Belongs to the eukaryotic ribosomal protein eS8 family. As to quaternary structure, part of the 30S ribosomal subunit.

The sequence is that of Small ribosomal subunit protein eS8 (rps8e) from Aeropyrum pernix (strain ATCC 700893 / DSM 11879 / JCM 9820 / NBRC 100138 / K1).